Consider the following 173-residue polypeptide: Protein GrpE (173 aa).

Residues 1 to 20 (MQDEFKTDTPRTEAGSEKET) show a composition bias toward basic and acidic residues. The segment at 1–23 (MQDEFKTDTPRTEAGSEKETMPS) is disordered.

It belongs to the GrpE family. As to quaternary structure, homodimer.

Its subcellular location is the cytoplasm. Functionally, participates actively in the response to hyperosmotic and heat shock by preventing the aggregation of stress-denatured proteins, in association with DnaK and GrpE. It is the nucleotide exchange factor for DnaK and may function as a thermosensor. Unfolded proteins bind initially to DnaJ; upon interaction with the DnaJ-bound protein, DnaK hydrolyzes its bound ATP, resulting in the formation of a stable complex. GrpE releases ADP from DnaK; ATP binding to DnaK triggers the release of the substrate protein, thus completing the reaction cycle. Several rounds of ATP-dependent interactions between DnaJ, DnaK and GrpE are required for fully efficient folding. This is Protein GrpE from Thiobacillus denitrificans (strain ATCC 25259 / T1).